A 333-amino-acid chain; its full sequence is Methylosome protein WDR77 (333 aa).

WD repeat units lie at residues 16–59 (CMEV…GAPN), 68–106 (QTEA…SLLV), 113–152 (EHDD…VLKS), 155–195 (AHSS…PATR), 199–240 (CASD…SAQT), 243–283 (VHSQ…VFRD), and 285–328 (SHRD…NLIA).

In terms of assembly, heterotetramer; dimer of heterodimer with prmt5. Interacts with histone h2a and h4 and with nucleoplasmin. Detected in egg (at protein level).

It is found in the cytoplasm. It localises to the nucleus. Its function is as follows. Non-catalytic component of the 20S prmt5-containing methyltransferase complex, which modifies specific arginines to dimethylarginines in several spliceosomal Sm proteins and histones. Required for normal prmt5 methyltransferase activity. The polypeptide is Methylosome protein WDR77 (Xenopus laevis (African clawed frog)).